Consider the following 180-residue polypeptide: NAD(P)H-quinone oxidoreductase subunit I, chloroplastic (180 aa).

2 4Fe-4S ferredoxin-type domains span residues 55–84 (GRIH…VDWR) and 95–124 (LNYS…MTEE). Cys64, Cys67, Cys70, Cys74, Cys104, Cys107, Cys110, and Cys114 together coordinate [4Fe-4S] cluster.

The protein belongs to the complex I 23 kDa subunit family. In terms of assembly, NDH is composed of at least 16 different subunits, 5 of which are encoded in the nucleus. [4Fe-4S] cluster is required as a cofactor.

Its subcellular location is the plastid. It localises to the chloroplast thylakoid membrane. The catalysed reaction is a plastoquinone + NADH + (n+1) H(+)(in) = a plastoquinol + NAD(+) + n H(+)(out). It carries out the reaction a plastoquinone + NADPH + (n+1) H(+)(in) = a plastoquinol + NADP(+) + n H(+)(out). In terms of biological role, NDH shuttles electrons from NAD(P)H:plastoquinone, via FMN and iron-sulfur (Fe-S) centers, to quinones in the photosynthetic chain and possibly in a chloroplast respiratory chain. The immediate electron acceptor for the enzyme in this species is believed to be plastoquinone. Couples the redox reaction to proton translocation, and thus conserves the redox energy in a proton gradient. In Dioscorea elephantipes (Elephant's foot yam), this protein is NAD(P)H-quinone oxidoreductase subunit I, chloroplastic.